A 629-amino-acid chain; its full sequence is tRNA uridine 5-carboxymethylaminomethyl modification enzyme MnmG (629 aa).

Residues 18–23 (GGGHAG), Val-130, and Ser-188 each bind FAD. 280-294 (GPRYCPSIEDKVVRF) serves as a coordination point for NAD(+). Gln-377 contacts FAD.

This sequence belongs to the MnmG family. As to quaternary structure, homodimer. Heterotetramer of two MnmE and two MnmG subunits. The cofactor is FAD.

The protein resides in the cytoplasm. Its function is as follows. NAD-binding protein involved in the addition of a carboxymethylaminomethyl (cmnm) group at the wobble position (U34) of certain tRNAs, forming tRNA-cmnm(5)s(2)U34. This chain is tRNA uridine 5-carboxymethylaminomethyl modification enzyme MnmG, found in Granulibacter bethesdensis (strain ATCC BAA-1260 / CGDNIH1).